We begin with the raw amino-acid sequence, 305 residues long: tRNA pseudouridine synthase B (305 aa).

The Nucleophile role is filled by D41.

Belongs to the pseudouridine synthase TruB family. Type 1 subfamily.

It carries out the reaction uridine(55) in tRNA = pseudouridine(55) in tRNA. In terms of biological role, responsible for synthesis of pseudouridine from uracil-55 in the psi GC loop of transfer RNAs. This is tRNA pseudouridine synthase B from Prochlorococcus marinus (strain MIT 9301).